Here is a 1531-residue protein sequence, read N- to C-terminus: MALRGFCSADGSDPLWDWNVTWNTSNPDFTKCFQNTVLVWVPCFYLWACFPFYFLYLSRHDRGYIQMTPLNKTKTALGFLLWIVCWADLFYSFWERSRGIFLAPVFLVSPTLLGITMLLATFLIQLERRKGVQSSGIMLTFWLVALVCALAILRSKIMTALKEDAQVDLFRDITFYVYFSLLLIQLVLSCFSDRSPLFSETIHDPNPCPESSASFLSRITFWWITGLIVRGYRQPLEGSDLWSLNKEDTSEQVVPVLVKNWKKECAKTRKQPVKVVYSSKDPAQPKESSKVDANEEVEALIVKSPQKEWNPSLFKVLYKTFGPYFLMSFFFKAIHDLMMFSGPQILKLLIKFVNDTKAPDWQGYFYTVLLFVTACLQTLVLHQYFHICFVSGMRIKTAVIGAVYRKALVITNSARKSSTVGEIVNLMSVDAQRFMDLATYINMIWSAPLQVILALYLLWLNLGPSVLAGVAVMVLMVPVNAVMAMKTKTYQVAHMKSKDNRIKLMNEILNGIKVLKLYAWELAFKDKVLAIRQEELKVLKKSAYLSAVGTFTWVCTPFLVALCTFAVYVTIDENNILDAQTAFVSLALFNILRFPLNILPMVISSIVQASVSLKRLRIFLSHEELEPDSIERRPVKDGGGTNSITVRNATFTWARSDPPTLNGITFSIPEGALVAVVGQVGCGKSSLLSALLAEMDKVEGHVAIKGSVAYVPQQAWIQNDSLRENILFGCQLEEPYYRSVIQACALLPDLEILPSGDRTEIGEKGVNLSGGQKQRVSLARAVYSNADIYLFDDPLSAVDAHVGKHIFENVIGPKGMLKNKTRILVTHSMSYLPQVDVIIVMSGGKISEMGSYQELLARDGAFAEFLRTYASTEQEQDAEENGVTGVSGPGKEAKQMENGMLVTDSAGKQLQRQLSSSSSYSGDISRHHNSTAELQKAEAKKEETWKLMEADKAQTGQVKLSVYWDYMKAIGLFISFLSIFLFMCNHVSALASNYWLSLWTDDPIVNGTQEHTKVRLSVYGALGISQGIAVFGYSMAVSIGGILASRCLHVDLLHSILRSPMSFFERTPSGNLVNRFSKELDTVDSMIPEVIKMFMGSLFNVIGACIVILLATPIAAIIIPPLGLIYFFVQRFYVASSRQLKRLESVSRSPVYSHFNETLLGVSVIRAFEEQERFIHQSDLKVDENQKAYYPSIVANRWLAVRLECVGNCIVLFAALFAVISRHSLSAGLVGLSVSYSLQVTTYLNWLVRMSSEMETNIVAVERLKEYSETEKEAPWQIQETAPPSSWPQVGRVEFRNYCLRYREDLDFVLRHINVTINGGEKVGIVGRTGAGKSSLTLGLFRINESAEGEIIIDGINIAKIGLHDLRFKITIIPQDPVLFSGSLRMNLDPFSQYSDEEVWTSLELAHLKDFVSALPDKLDHECAEGGENLSVGQRQLVCLARALLRKTKILVLDEATAAVDLETDDLIQSTIRTQFEDCTVLTIAHRLNTIMDYTRVIVLDKGEIQEYGAPSDLLQQRGLFYSMAKDAGLV.

Topologically, residues 1–33 (MALRGFCSADGSDPLWDWNVTWNTSNPDFTKCF) are extracellular. N-linked (GlcNAc...) asparagine glycans are attached at residues Asn19 and Asn23. Residues 34 to 54 (QNTVLVWVPCFYLWACFPFYF) form a helical membrane-spanning segment. At 55 to 74 (LYLSRHDRGYIQMTPLNKTK) the chain is on the cytoplasmic side. The chain crosses the membrane as a helical span at residues 75-95 (TALGFLLWIVCWADLFYSFWE). The Extracellular portion of the chain corresponds to 96 to 100 (RSRGI). Residues 101 to 121 (FLAPVFLVSPTLLGITMLLAT) form a helical membrane-spanning segment. At 122-133 (FLIQLERRKGVQ) the chain is on the cytoplasmic side. A helical transmembrane segment spans residues 134–154 (SSGIMLTFWLVALVCALAILR). Residues 155 to 172 (SKIMTALKEDAQVDLFRD) are Extracellular-facing. The chain crosses the membrane as a helical span at residues 173–193 (ITFYVYFSLLLIQLVLSCFSD). The Cytoplasmic portion of the chain corresponds to 194–316 (RSPLFSETIH…KEWNPSLFKV (123 aa)). Tyr277 bears the Phosphotyrosine mark. Residue Ser289 is modified to Phosphoserine. Residues 317–337 (LYKTFGPYFLMSFFFKAIHDL) form a helical membrane-spanning segment. The ABC transmembrane type-1 1 domain occupies 325–608 (FLMSFFFKAI…LPMVISSIVQ (284 aa)). Over 338-363 (MMFSGPQILKLLIKFVNDTKAPDWQG) the chain is Extracellular. The chain crosses the membrane as a helical span at residues 364–384 (YFYTVLLFVTACLQTLVLHQY). Residues 385-440 (FHICFVSGMRIKTAVIGAVYRKALVITNSARKSSTVGEIVNLMSVDAQRFMDLATY) are Cytoplasmic-facing. A helical membrane pass occupies residues 441–461 (INMIWSAPLQVILALYLLWLN). Over 462 to 464 (LGP) the chain is Extracellular. Residues 465–485 (SVLAGVAVMVLMVPVNAVMAM) form a helical membrane-spanning segment. Residues 486–547 (KTKTYQVAHM…VLKKSAYLSA (62 aa)) are Cytoplasmic-facing. Position 503 is an N6-succinyllysine (Lys503). A helical transmembrane segment spans residues 548-568 (VGTFTWVCTPFLVALCTFAVY). The Extracellular portion of the chain corresponds to 569 to 590 (VTIDENNILDAQTAFVSLALFN). The chain crosses the membrane as a helical span at residues 591 to 611 (ILRFPLNILPMVISSIVQASV). Residues 612-967 (SLKRLRIFLS…VKLSVYWDYM (356 aa)) lie on the Cytoplasmic side of the membrane. The ABC transporter 1 domain maps to 644–868 (ITVRNATFTW…DGAFAEFLRT (225 aa)). ATP contacts are provided by residues Trp653, 678-685 (GQVGCGKS), and Gln713. Phosphoserine occurs at positions 905, 915, and 930. Residues 968–988 (KAIGLFISFLSIFLFMCNHVS) traverse the membrane as a helical segment. The region spanning 975-1256 (SFLSIFLFMC…LVRMSSEMET (282 aa)) is the ABC transmembrane type-1 2 domain. At 989–1025 (ALASNYWLSLWTDDPIVNGTQEHTKVRLSVYGALGIS) the chain is on the extracellular side. Asn1006 carries N-linked (GlcNAc...) asparagine glycosylation. Residues 1026 to 1046 (QGIAVFGYSMAVSIGGILASR) traverse the membrane as a helical segment. Residues 1047-1089 (CLHVDLLHSILRSPMSFFERTPSGNLVNRFSKELDTVDSMIPE) are Cytoplasmic-facing. Residues 1090 to 1110 (VIKMFMGSLFNVIGACIVILL) traverse the membrane as a helical segment. Ala1111 is a topological domain (extracellular). A helical transmembrane segment spans residues 1112 to 1132 (TPIAAIIIPPLGLIYFFVQRF). The Cytoplasmic segment spans residues 1133-1203 (YVASSRQLKR…VANRWLAVRL (71 aa)). The helical transmembrane segment at 1204–1224 (ECVGNCIVLFAALFAVISRHS) threads the bilayer. The Extracellular segment spans residues 1225–1226 (LS). Residues 1227–1247 (AGLVGLSVSYSLQVTTYLNWL) traverse the membrane as a helical segment. Residues 1248 to 1531 (VRMSSEMETN…YSMAKDAGLV (284 aa)) are Cytoplasmic-facing. An ABC transporter 2 domain is found at 1293–1527 (VEFRNYCLRY…RGLFYSMAKD (235 aa)). 1327-1334 (GRTGAGKS) provides a ligand contact to ATP.

It belongs to the ABC transporter superfamily. ABCC family. Conjugate transporter (TC 3.A.1.208) subfamily. (Microbial infection) Interacts with human cytomegalovirus protein UL138; this interaction mediates MRP1 degradation via the lysosome. In terms of tissue distribution, lung, testis and peripheral blood mononuclear cells.

The protein resides in the cell membrane. The protein localises to the basolateral cell membrane. It carries out the reaction ATP + H2O + xenobioticSide 1 = ADP + phosphate + xenobioticSide 2.. The enzyme catalyses an S-substituted glutathione(in) + ATP + H2O = an S-substituted glutathione(out) + ADP + phosphate + H(+). It catalyses the reaction sphing-4-enine 1-phosphate(in) + ATP + H2O = sphing-4-enine 1-phosphate(out) + ADP + phosphate + H(+). The catalysed reaction is leukotriene C4(in) + ATP + H2O = leukotriene C4(out) + ADP + phosphate + H(+). It carries out the reaction 17beta-estradiol 17-O-(beta-D-glucuronate)(in) + ATP + H2O = 17beta-estradiol 17-O-(beta-D-glucuronate)(out) + ADP + phosphate + H(+). The enzyme catalyses daunorubicin(in) + ATP + H2O = daunorubicin(out) + ADP + phosphate + H(+). It catalyses the reaction vincristine(in) + ATP + H2O = vincristine(out) + ADP + phosphate + H(+). The catalysed reaction is 2',3'-cGAMP(in) + ATP + H2O = 2',3'-cGAMP(out) + ADP + phosphate + H(+). It carries out the reaction S-[(2E,6E,10E)-geranylgeranyl]-L-glutathione(in) + ATP + H2O = S-[(2E,6E,10E)-geranylgeranyl]-L-glutathione(out) + ADP + phosphate + H(+). The enzyme catalyses prostaglandin A2-S-(R)-glutathione(in) + ATP + H2O = prostaglandin A2-S-(R)-glutathione(out) + ADP + phosphate + H(+). It catalyses the reaction prostaglandin A2-S-(S)-glutathione(in) + ATP + H2O = prostaglandin A2-S-(S)-glutathione(out) + ADP + phosphate + H(+). MK 571 inhibits sphingosine 1-phosphate and leukotriene C4 export. Mediates export of organic anions and drugs from the cytoplasm. Mediates ATP-dependent transport of glutathione and glutathione conjugates, leukotriene C4, estradiol-17-beta-o-glucuronide, methotrexate, antiviral drugs and other xenobiotics. Confers resistance to anticancer drugs by decreasing accumulation of drug in cells, and by mediating ATP- and GSH-dependent drug export. Hydrolyzes ATP with low efficiency. Catalyzes the export of sphingosine 1-phosphate from mast cells independently of their degranulation. Participates in inflammatory response by allowing export of leukotriene C4 from leukotriene C4-synthesizing cells. Mediates ATP-dependent, GSH-independent cyclic GMP-AMP (cGAMP) export. Thus, by limiting intracellular cGAMP concentrations negatively regulates the cGAS-STING pathway. Exports S-geranylgeranyl-glutathione (GGG) in lymphoid cells and stromal compartments of lymphoid organs. ABCC1 (via extracellular transport) with GGT5 (via GGG catabolism) establish GGG gradients within lymphoid tissues to position P2RY8-positive lymphocytes at germinal centers in lymphoid follicles and restrict their chemotactic transmigration from blood vessels to the bone marrow parenchyma. Mediates basolateral export of GSH-conjugated R- and S-prostaglandin A2 diastereomers in polarized epithelial cells. The sequence is that of Multidrug resistance-associated protein 1 from Homo sapiens (Human).